The primary structure comprises 901 residues: Protein translocase subunit SecA (901 aa).

Residues Q87, 105 to 109 (GEGKT), and D512 contribute to the ATP site. The disordered stretch occupies residues 859–901 (HQDDDSAAAAALAAQTGERKVGRNDPCPCGSGKKYKQCHGRLQ). Zn(2+) contacts are provided by C885, C887, C896, and H897. Positions 891 to 901 (KKYKQCHGRLQ) are enriched in basic residues.

Belongs to the SecA family. Monomer and homodimer. Part of the essential Sec protein translocation apparatus which comprises SecA, SecYEG and auxiliary proteins SecDF-YajC and YidC. The cofactor is Zn(2+).

The protein localises to the cell inner membrane. Its subcellular location is the cytoplasm. The catalysed reaction is ATP + H2O + cellular proteinSide 1 = ADP + phosphate + cellular proteinSide 2.. Its function is as follows. Part of the Sec protein translocase complex. Interacts with the SecYEG preprotein conducting channel. Has a central role in coupling the hydrolysis of ATP to the transfer of proteins into and across the cell membrane, serving both as a receptor for the preprotein-SecB complex and as an ATP-driven molecular motor driving the stepwise translocation of polypeptide chains across the membrane. The sequence is that of Protein translocase subunit SecA from Escherichia coli O127:H6 (strain E2348/69 / EPEC).